The primary structure comprises 382 residues: MGSGEPNPAGKKKKYLKAALYVGDLDPDVTEDMLYKKFRPAGPLRFTRICRDPVTRSPLGYGYVNFRFPADAEWALNTMNFDLINGKPFRLMWSQPDDRLRKSGVGNIFIKNLDKSIDNRALFYLFSAFGNILSCKVVCDDNGSKGYAYVHFDSLAAANRAIWHMNGVRLNNRQVYVGRFKFPEERAAEVRTRDRATFTNVFVKNIGDDIDDEKLKELFCEYGPTESVKVIRDASGKSKGFGFVRYETHEAAQKAVLDLHGKSIDGKVLYVGRAQKKIERLAELRRRFERLRLKEKSRPPGVPIYIKNLDETINDEKLKEEFSSFGSISRAKVMMEVGQGKGFGVVCFSSFEEATKAVDEMNGRIVGSKPLHVTLGQARRRC.

RRM domains follow at residues Ala-18 to Pro-96, Gly-106 to Phe-182, Thr-199 to Lys-276, and Val-302 to Ala-378.

Its subcellular location is the cytoplasm. In terms of biological role, binds the poly(A) tail of mRNA. May be involved in cytoplasmic regulatory processes of mRNA metabolism. Can probably bind to cytoplasmic RNA sequences other than poly(A) in vivo. The protein is Polyadenylate-binding protein 5 (PABPC5) of Gorilla gorilla gorilla (Western lowland gorilla).